The following is a 620-amino-acid chain: Cryptochrome-1 (620 aa).

The Photolyase/cryptochrome alpha/beta domain maps to 3-132; the sequence is VNAVHWFRKG…EVIVRISHTL (130 aa). 3 consecutive short sequence motifs (LIR) follow at residues 50-54, 82-87, and 151-156; these read NRWRF, DVFPRL, and KRFQTL. FAD is bound at residue Ser-252. 4 short sequence motifs (LIR) span residues 255 to 260, 271 to 276, 285 to 290, and 335 to 339; these read LRFGCL, DLYKKV, SLYGQL, and TGFPW. Gln-289 contributes to the FAD binding site. Residue His-355 coordinates FAD. The short motif at 379-384 is the LIR 8 element; it reads KVFEEL. 387–389 serves as a coordination point for FAD; the sequence is DAD. 5 consecutive short sequence motifs (LIR) follow at residues 395–400, 411–416, 430–435, 486–491, and 492–497; these read GSWMWL, HCYCPV, RRYLPV, QIYQQL, and SRYRGL. Residues 592–620 form a disordered region; sequence GTGISAGKRPNPEEETQSVGPKVQRQSTN.

This sequence belongs to the DNA photolyase class-1 family. As to quaternary structure, component of the circadian core oscillator, which includes the CRY proteins, CLOCK or NPAS2, BMAL1 or BMAL2, CSNK1E, and the PER proteins. FAD serves as cofactor. (6R)-5,10-methylene-5,6,7,8-tetrahydrofolate is required as a cofactor. In terms of tissue distribution, expressed in the retina. High levels found in ganglion cells of the retina.

It localises to the cytoplasm. The protein resides in the nucleus. Transcriptional repressor which forms a core component of the circadian clock. The circadian clock, an internal time-keeping system, regulates various physiological processes through the generation of approximately 24 hour circadian rhythms in gene expression, which are translated into rhythms in metabolism and behavior. It is derived from the Latin roots 'circa' (about) and 'diem' (day) and acts as an important regulator of a wide array of physiological functions including metabolism, sleep, body temperature, blood pressure, endocrine, immune, cardiovascular, and renal function. Consists of two major components: the central clock, residing in the suprachiasmatic nucleus (SCN) of the brain, and the peripheral clocks that are present in nearly every tissue and organ system. Both the central and peripheral clocks can be reset by environmental cues, also known as Zeitgebers (German for 'timegivers'). The predominant Zeitgeber for the central clock is light, which is sensed by retina and signals directly to the SCN. The central clock entrains the peripheral clocks through neuronal and hormonal signals, body temperature and feeding-related cues, aligning all clocks with the external light/dark cycle. Circadian rhythms allow an organism to achieve temporal homeostasis with its environment at the molecular level by regulating gene expression to create a peak of protein expression once every 24 hours to control when a particular physiological process is most active with respect to the solar day. Transcription and translation of core clock components (CLOCK, NPAS2, BMAL1, BMAL2, PER1, PER2, PER3, CRY1 and CRY2) plays a critical role in rhythm generation, whereas delays imposed by post-translational modifications (PTMs) are important for determining the period (tau) of the rhythms (tau refers to the period of a rhythm and is the length, in time, of one complete cycle). A diurnal rhythm is synchronized with the day/night cycle, while the ultradian and infradian rhythms have a period shorter and longer than 24 hours, respectively. Disruptions in the circadian rhythms contribute to the pathology of cardiovascular diseases, cancer, metabolic syndromes and aging. A transcription/translation feedback loop (TTFL) forms the core of the molecular circadian clock mechanism. Transcription factors, CLOCK or NPAS2 and BMAL1 or BMAL2, form the positive limb of the feedback loop, act in the form of a heterodimer and activate the transcription of core clock genes and clock-controlled genes (involved in key metabolic processes), harboring E-box elements (5'-CACGTG-3') within their promoters. The core clock genes: PER1/2/3 and CRY1/2 which are transcriptional repressors form the negative limb of the feedback loop and interact with the CLOCK|NPAS2-BMAL1|BMAL2 heterodimer inhibiting its activity and thereby negatively regulating their own expression. This heterodimer also activates nuclear receptors NR1D1, NR1D2, RORA, RORB and RORG, which form a second feedback loop and which activate and repress BMAL1 transcription, respectively. CRY1 and CRY2 have redundant functions but also differential and selective contributions at least in defining the pace of the SCN circadian clock and its circadian transcriptional outputs. More potent transcriptional repressor in cerebellum and liver than CRY2, though more effective in lengthening the period of the SCN oscillator. On its side, CRY2 seems to play a critical role in tuning SCN circadian period by opposing the action of CRY1. With CRY2, is dispensable for circadian rhythm generation but necessary for the development of intercellular networks for rhythm synchrony. Capable of translocating circadian clock core proteins such as PER proteins to the nucleus. Interacts with CLOCK:BMAL1 independently of PER proteins and is found at CLOCK:BMAL1-bound sites, suggesting that CRY may act as a molecular gatekeeper to maintain CLOCK:BMAL1 in a poised and repressed state until the proper time for transcriptional activation. The protein is Cryptochrome-1 (CRY1) of Sylvia borin (Garden warbler).